We begin with the raw amino-acid sequence, 179 residues long: Acireductone dioxygenase (179 aa).

4 residues coordinate Fe(2+): His-100, His-102, Glu-106, and His-145. Positions 100, 102, 106, and 145 each coordinate Ni(2+).

This sequence belongs to the acireductone dioxygenase (ARD) family. Monomer. Requires Fe(2+) as cofactor. It depends on Ni(2+) as a cofactor.

The enzyme catalyses 1,2-dihydroxy-5-(methylsulfanyl)pent-1-en-3-one + O2 = 3-(methylsulfanyl)propanoate + CO + formate + 2 H(+). It carries out the reaction 1,2-dihydroxy-5-(methylsulfanyl)pent-1-en-3-one + O2 = 4-methylsulfanyl-2-oxobutanoate + formate + 2 H(+). It functions in the pathway amino-acid biosynthesis; L-methionine biosynthesis via salvage pathway; L-methionine from S-methyl-5-thio-alpha-D-ribose 1-phosphate: step 5/6. Catalyzes 2 different reactions between oxygen and the acireductone 1,2-dihydroxy-3-keto-5-methylthiopentene (DHK-MTPene) depending upon the metal bound in the active site. Fe-containing acireductone dioxygenase (Fe-ARD) produces formate and 2-keto-4-methylthiobutyrate (KMTB), the alpha-ketoacid precursor of methionine in the methionine recycle pathway. Ni-containing acireductone dioxygenase (Ni-ARD) produces methylthiopropionate, carbon monoxide and formate, and does not lie on the methionine recycle pathway. The sequence is that of Acireductone dioxygenase from Bacillus licheniformis (strain ATCC 14580 / DSM 13 / JCM 2505 / CCUG 7422 / NBRC 12200 / NCIMB 9375 / NCTC 10341 / NRRL NRS-1264 / Gibson 46).